A 484-amino-acid chain; its full sequence is Glutamate--tRNA ligase (484 aa).

A 'HIGH' region motif is present at residues 9-19 (PSPTGNLHIGT). 4 residues coordinate Zn(2+): cysteine 98, cysteine 100, histidine 125, and histidine 127. Positions 250–254 (KLSKR) match the 'KMSKS' region motif. Lysine 253 contacts ATP.

The protein belongs to the class-I aminoacyl-tRNA synthetase family. Glutamate--tRNA ligase type 1 subfamily. In terms of assembly, monomer. Zn(2+) serves as cofactor.

The protein resides in the cytoplasm. The catalysed reaction is tRNA(Glu) + L-glutamate + ATP = L-glutamyl-tRNA(Glu) + AMP + diphosphate. Its function is as follows. Catalyzes the attachment of glutamate to tRNA(Glu) in a two-step reaction: glutamate is first activated by ATP to form Glu-AMP and then transferred to the acceptor end of tRNA(Glu). This Crocosphaera subtropica (strain ATCC 51142 / BH68) (Cyanothece sp. (strain ATCC 51142)) protein is Glutamate--tRNA ligase.